Consider the following 428-residue polypeptide: Serine--tRNA ligase (428 aa).

231–233 (TAE) is an L-serine binding site. 262 to 264 (RAE) serves as a coordination point for ATP. Residue Glu-285 participates in L-serine binding. 349–352 (EISS) contacts ATP. Position 385 (Ser-385) interacts with L-serine.

It belongs to the class-II aminoacyl-tRNA synthetase family. Type-1 seryl-tRNA synthetase subfamily. Homodimer. The tRNA molecule binds across the dimer.

It is found in the cytoplasm. The catalysed reaction is tRNA(Ser) + L-serine + ATP = L-seryl-tRNA(Ser) + AMP + diphosphate + H(+). It carries out the reaction tRNA(Sec) + L-serine + ATP = L-seryl-tRNA(Sec) + AMP + diphosphate + H(+). It participates in aminoacyl-tRNA biosynthesis; selenocysteinyl-tRNA(Sec) biosynthesis; L-seryl-tRNA(Sec) from L-serine and tRNA(Sec): step 1/1. In terms of biological role, catalyzes the attachment of serine to tRNA(Ser). Is also able to aminoacylate tRNA(Sec) with serine, to form the misacylated tRNA L-seryl-tRNA(Sec), which will be further converted into selenocysteinyl-tRNA(Sec). The protein is Serine--tRNA ligase of Methylorubrum extorquens (strain CM4 / NCIMB 13688) (Methylobacterium extorquens).